Consider the following 97-residue polypeptide: Large ribosomal subunit protein uL23 (97 aa).

The protein belongs to the universal ribosomal protein uL23 family. In terms of assembly, part of the 50S ribosomal subunit. Contacts protein L29, and trigger factor when it is bound to the ribosome.

One of the early assembly proteins it binds 23S rRNA. One of the proteins that surrounds the polypeptide exit tunnel on the outside of the ribosome. Forms the main docking site for trigger factor binding to the ribosome. This Limosilactobacillus fermentum (strain NBRC 3956 / LMG 18251) (Lactobacillus fermentum) protein is Large ribosomal subunit protein uL23.